Consider the following 391-residue polypeptide: Phosphoglycerate kinase (391 aa).

Substrate contacts are provided by residues 21 to 23, R36, 59 to 62, R113, and R146; these read DLN and HLGR. Residues K197, E319, and 345 to 348 contribute to the ATP site; that span reads GGDT.

This sequence belongs to the phosphoglycerate kinase family. As to quaternary structure, monomer.

The protein localises to the cytoplasm. The catalysed reaction is (2R)-3-phosphoglycerate + ATP = (2R)-3-phospho-glyceroyl phosphate + ADP. It participates in carbohydrate degradation; glycolysis; pyruvate from D-glyceraldehyde 3-phosphate: step 2/5. The protein is Phosphoglycerate kinase of Shewanella frigidimarina (strain NCIMB 400).